A 479-amino-acid chain; its full sequence is Glutamate--tRNA ligase (479 aa).

Positions 9–19 (PSPTGLFHIGT) match the 'HIGH' region motif. Positions 248–252 (KLSKR) match the 'KMSKS' region motif. K251 is a binding site for ATP.

Belongs to the class-I aminoacyl-tRNA synthetase family. Glutamate--tRNA ligase type 1 subfamily. In terms of assembly, monomer.

Its subcellular location is the cytoplasm. The catalysed reaction is tRNA(Glu) + L-glutamate + ATP = L-glutamyl-tRNA(Glu) + AMP + diphosphate. In terms of biological role, catalyzes the attachment of glutamate to tRNA(Glu) in a two-step reaction: glutamate is first activated by ATP to form Glu-AMP and then transferred to the acceptor end of tRNA(Glu). The protein is Glutamate--tRNA ligase of Prochlorococcus marinus (strain MIT 9215).